A 335-amino-acid polypeptide reads, in one-letter code: UPF0353 protein NFA_34780 (335 aa).

The next 2 membrane-spanning stretches (helical) occupy residues 8–28 (ALIW…YVLV) and 61–81 (IALM…PTSV). Positions 90-295 (TVVLVMDVSL…EELTAVYDTL (206 aa)) constitute a VWFA domain. The chain crosses the membrane as a helical span at residues 310–330 (RPWLLLGMLVVAAGIVTGLLY).

The protein belongs to the UPF0353 family.

It is found in the cell membrane. The sequence is that of UPF0353 protein NFA_34780 from Nocardia farcinica (strain IFM 10152).